Here is a 310-residue protein sequence, read N- to C-terminus: p-hydroxybenzoic acid efflux pump subunit AaeA (310 aa).

A helical transmembrane segment spans residues 12–32; it reads AITVVLVILAFIAIFNAWVYY.

This sequence belongs to the membrane fusion protein (MFP) (TC 8.A.1) family.

It is found in the cell inner membrane. In terms of biological role, forms an efflux pump with AaeB. This chain is p-hydroxybenzoic acid efflux pump subunit AaeA, found in Shigella flexneri.